The following is a 307-amino-acid chain: Serine/threonine-protein phosphatase 4 catalytic subunit B (307 aa).

The Mn(2+) site is built by Asp54, His56, Asp82, and Asn114. Catalysis depends on His115, which acts as the Proton donor. His164 and His238 together coordinate Mn(2+). Leu307 is subject to Leucine methyl ester.

This sequence belongs to the PPP phosphatase family. PP-4 (PP-X) subfamily. As to quaternary structure, serine/threonine-protein phosphatase 4 (PP4) occurs in different assemblies of the catalytic and one or more regulatory subunits. The cofactor is Mn(2+).

Its subcellular location is the cytoplasm. It localises to the cytoskeleton. The protein resides in the microtubule organizing center. The protein localises to the centrosome. It catalyses the reaction O-phospho-L-seryl-[protein] + H2O = L-seryl-[protein] + phosphate. It carries out the reaction O-phospho-L-threonyl-[protein] + H2O = L-threonyl-[protein] + phosphate. Its function is as follows. Protein phosphatase that regulates many processes such as microtubule organization at centrosomes. The sequence is that of Serine/threonine-protein phosphatase 4 catalytic subunit B (ppp4cb) from Danio rerio (Zebrafish).